The following is a 70-amino-acid chain: Large ribosomal subunit protein eL38 (70 aa).

It belongs to the eukaryotic ribosomal protein eL38 family.

The polypeptide is Large ribosomal subunit protein eL38 (RPL38) (Branchiostoma belcheri (Amphioxus)).